Here is a 309-residue protein sequence, read N- to C-terminus: tRNA pseudouridine synthase B (309 aa).

Catalysis depends on Asp-52, which acts as the Nucleophile.

It belongs to the pseudouridine synthase TruB family. Type 1 subfamily.

It catalyses the reaction uridine(55) in tRNA = pseudouridine(55) in tRNA. Responsible for synthesis of pseudouridine from uracil-55 in the psi GC loop of transfer RNAs. The sequence is that of tRNA pseudouridine synthase B from Leptospira interrogans serogroup Icterohaemorrhagiae serovar copenhageni (strain Fiocruz L1-130).